Consider the following 1078-residue polypeptide: A type blood alpha-D-galactosamine galactosaminidase (1078 aa).

The N-terminal stretch at 1 to 26 (MRGKKFISLTLSTMLCLQLLPTASFA) is a signal peptide. The interval 306–570 (PDSSYDLRWE…NNIWYPSAVG (265 aa)) is glycoside hydrolase 36 domain. D463 serves as the catalytic Nucleophile. D532 is an active-site residue. Residues 699-1078 (PDPEPVDPDY…LDYLTYTTNA (380 aa)) are not required for activity on soluble substrates.

This sequence belongs to the glycosyl hydrolase 36 family.

It catalyses the reaction an alpha-D-galactosaminyl-(1-&gt;3)-[alpha-L-fucosyl-(1-&gt;2)]-beta-D-galactosyl derivative + H2O = D-galactosamine + an alpha-L-fucosyl-(1-&gt;2)-beta-D-galactosyl derivative. In terms of biological role, one of an enzyme pair that work together to convert the A antigen to the H antigen of the O blood type, which together release galactosamine. Catalyzes the second step in the conversion, acts on the product of the first reaction (FpGalNAcDeAc, AC P0DTR4). Is specific for galactosamine containing sugars, does not cleave GalNAc residues. This chain is A type blood alpha-D-galactosamine galactosaminidase, found in Flavonifractor plautii (Fusobacterium plautii).